The following is a 271-amino-acid chain: Probable short-chain type dehydrogenase/reductase VdlC (271 aa).

Residue 1–25 participates in NAD(+) binding; that stretch reads MAVITGASSGIGLECVLMLLNQGYK. Ser-129 provides a ligand contact to substrate. Residue Tyr-142 is the Proton acceptor of the active site.

Belongs to the short-chain dehydrogenases/reductases (SDR) family.

The protein is Probable short-chain type dehydrogenase/reductase VdlC (vdlC) of Helicobacter pylori (strain J99 / ATCC 700824) (Campylobacter pylori J99).